Consider the following 129-residue polypeptide: Small ribosomal subunit protein uS11 (129 aa).

This sequence belongs to the universal ribosomal protein uS11 family. In terms of assembly, part of the 30S ribosomal subunit. Interacts with proteins S7 and S18. Binds to IF-3.

In terms of biological role, located on the platform of the 30S subunit, it bridges several disparate RNA helices of the 16S rRNA. Forms part of the Shine-Dalgarno cleft in the 70S ribosome. The polypeptide is Small ribosomal subunit protein uS11 (Buchnera aphidicola subsp. Baizongia pistaciae (strain Bp)).